A 1242-amino-acid chain; its full sequence is Insulin receptor substrate 1 (1242 aa).

A Phosphoserine modification is found at serine 3. Residues serine 3 to serine 137 are mediates interaction with PHIP. In terms of domain architecture, PH spans aspartate 12 to asparagine 115. Position 99 is a phosphoserine; by CK2 (serine 99). The 105-residue stretch at phenylalanine 160–phenylalanine 264 folds into the IRS-type PTB domain. The disordered stretch occupies residues aspartate 262 to glutamate 430. Positions lysine 269–serine 281 are enriched in low complexity. A phosphoserine; by RPS6KB1 mark is found at serine 270 and serine 307. A Phosphoserine; by IKKB, MAPK8 and RPS6KB1 modification is found at serine 312. Phosphoserine is present on residues serine 315, serine 323, serine 330, serine 345, and serine 348. Over residues threonine 354 to alanine 363 the composition is skewed to basic residues. Composition is skewed to low complexity over residues serine 383–serine 404 and serine 412–glycine 424. Serine 419 bears the Phosphoserine mark. Phosphothreonine is present on residues threonine 446 and threonine 453. At tyrosine 465 the chain carries Phosphotyrosine; by INSR. The YXXM motif 1 signature appears at tyrosine 465–methionine 468. Position 527 is a phosphoserine; by RPS6KB1 (serine 527). The short motif at tyrosine 551–methionine 554 is the YXXM motif 2 element. Basic and acidic residues predominate over residues leucine 592–aspartate 610. The interval leucine 592 to serine 616 is disordered. Tyrosine 612 carries the phosphotyrosine; by INSR modification. Positions tyrosine 612–methionine 615 match the YXXM motif 3 motif. A phosphoserine mark is found at serine 616 and serine 629. Tyrosine 632 is subject to Phosphotyrosine; by INSR. Positions tyrosine 632–methionine 635 match the YXXM motif 4 motif. Serine 636 carries the phosphoserine; by RPS6KB1 modification. Tyrosine 662 carries the post-translational modification Phosphotyrosine. Residues tyrosine 662 to methionine 665 carry the YXXM motif 5 motif. The segment at serine 668–threonine 693 is disordered. A YXXM motif 6 motif is present at residues tyrosine 732–methionine 735. Disordered regions lie at residues phenylalanine 771–glutamate 900 and serine 918–glycine 937. A compositionally biased stretch (basic and acidic residues) spans arginine 776 to arginine 785. Residue serine 794 is modified to Phosphoserine; by AMPK and SIK2. The span at alanine 801–serine 815 shows a compositional bias: low complexity. A Phosphoserine modification is found at serine 892. The residue at position 896 (tyrosine 896) is a Phosphotyrosine; by INSR. Residues tyrosine 896–asparagine 898 are GRB2-binding. The span at serine 918–glutamine 928 shows a compositional bias: polar residues. Tyrosine 941 and tyrosine 989 each carry phosphotyrosine; by INSR. 3 consecutive short sequence motifs (YXXM motif) follow at residues tyrosine 941–methionine 944, tyrosine 989–methionine 992, and tyrosine 1012–methionine 1015. Residues serine 1057 to phenylalanine 1146 form a disordered region. Residues threonine 1073–alanine 1085 show a composition bias toward polar residues. Serine 1100 carries the post-translational modification Phosphoserine. Residue serine 1101 is modified to Phosphoserine; by RPS6KB1 and PKC/PRKCQ. Positions glutamate 1102 to glycine 1114 are enriched in polar residues. Tyrosine 1179 carries the phosphotyrosine; by INSR modification. Residues lysine 1186 and lysine 1189 each participate in a glycyl lysine isopeptide (Lys-Gly) (interchain with G-Cter in ubiquitin) cross-link. The disordered stretch occupies residues glutamine 1190 to glutamine 1242. Positions glutamate 1198–glutamine 1209 are enriched in pro residues. The segment covering proline 1210–arginine 1220 has biased composition (low complexity). Tyrosine 1229 carries the post-translational modification Phosphotyrosine; by INSR.

In terms of assembly, interacts with UBTF and PIK3CA. Interacts (via phosphorylated YXXM motifs) with PIK3R1. Interacts with ROCK1 and FER. Interacts (via PH domain) with PHIP. Interacts with GRB2. Interacts with SOCS7. Interacts (via IRS-type PTB domain) with IGF1R and INSR (via the tyrosine-phosphorylated NPXY motif). Interacts with ALK. Interacts with EIF2AK2/PKR. Interacts with GKAP1. Interacts with DGKZ in the absence of insulin; insulin stimulation decreases this interaction. Found in a ternary complex with DGKZ and PIP5K1A in the absence of insulin stimulation. Interacts with SQSTM1; the interaction is disrupted by the presence of tensin TNS2. Interacts with NCK1 (via SH2 domain). Interacts with NCK2 (via SH3 domain). Interacts with SH2B1; this interaction enhances leptin-induced activation of the PI3-kinase pathway. Interacts with DVL2; this interaction promotes the Wnt/beta-catenin signaling pathway. Serine phosphorylation of IRS1 is a mechanism for insulin resistance. Ser-307, Ser-312, Ser-315, and Ser-323 phosphorylations inhibit insulin action through disruption of IRS1 interaction with the insulin receptor INSR. Phosphorylation of Tyr-896 is required for GRB2-binding. Phosphorylated by ALK. Phosphorylated at Ser-270, Ser-307, Ser-636 and Ser-1101 by RPS6KB1; phosphorylation induces accelerated degradation of IRS1. Phosphorylated on tyrosine residues in response to insulin. In skeletal muscles, dephosphorylated on Tyr-612 by TNS2 under anabolic conditions; dephosphorylation results in the proteasomal degradation of IRS1. In terms of processing, ubiquitinated by the Cul7-RING(FBXW8) complex in a mTOR-dependent manner, leading to its degradation: the Cul7-RING(FBXW8) complex recognizes and binds IRS1 previously phosphorylated by S6 kinase (RPS6KB1 or RPS6KB2). Ubiquitinated by TRAF4 through 'Lys-29' linkage; this ubiquitination regulates the interaction of IRS1 with IGFR and IRS1 tyrosine phosphorylation upon IGF1 stimulation. Post-translationally, S-nitrosylation at by BLVRB inhibits its activity.

The protein resides in the cytoplasm. The protein localises to the nucleus. Signaling adapter protein that participates in the signal transduction from two prominent receptor tyrosine kinases, insulin receptor/INSR and insulin-like growth factor I receptor/IGF1R. Plays therefore an important role in development, growth, glucose homeostasis as well as lipid metabolism. Upon phosphorylation by the insulin receptor, functions as a signaling scaffold that propagates insulin action through binding to SH2 domain-containing proteins including the p85 regulatory subunit of PI3K, NCK1, NCK2, GRB2 or SHP2. Recruitment of GRB2 leads to the activation of the guanine nucleotide exchange factor SOS1 which in turn triggers the Ras/Raf/MEK/MAPK signaling cascade. Activation of the PI3K/AKT pathway is responsible for most of insulin metabolic effects in the cell, and the Ras/Raf/MEK/MAPK is involved in the regulation of gene expression and in cooperation with the PI3K pathway regulates cell growth and differentiation. Acts a positive regulator of the Wnt/beta-catenin signaling pathway through suppression of DVL2 autophagy-mediated degradation leading to cell proliferation. The chain is Insulin receptor substrate 1 (IRS1) from Homo sapiens (Human).